A 1170-amino-acid chain; its full sequence is Thrombospondin-1 (1170 aa).

Residues 1–18 (MELLRGLGVLFLLHMCGS) form the signal peptide. The tract at residues 47-95 (RLVKGQDLSSPAFRIENANLIPAVPDDKFQDLLDAVWADKGFIFLASLR) is heparin-binding. A Laminin G-like domain is found at 56–270 (SPAFRIENAN…HKTKDLQAIC (215 aa)). A disulfide bridge connects residues Cys171 and Cys232. N-linked (GlcNAc...) asparagine glycans are attached at residues Asn248 and Asn360. The VWFC domain occupies 316–373 (PLCFHNGVQYKNNEEWTVDSCTECHCQNSVTICKKVSCPIMPCSNATVPDGECCPRCW). 3 consecutive TSP type-1 domains span residues 379-429 (DDGW…QECD), 435-490 (DGGW…DACP), and 492-547 (NGGW…QDCP). A C-linked (Man) tryptophan glycan is attached at Trp385. 3 disulfide bridges follow: Cys391-Cys423, Cys395-Cys428, and Cys406-Cys413. C-linked (Man) tryptophan glycosylation is found at Trp438 and Trp441. Cystine bridges form between Cys447–Cys484, Cys451–Cys489, and Cys462–Cys474. A glycan (O-linked (Fuc...) threonine) is linked at Thr450. A glycan (C-linked (Man) tryptophan) is linked at Trp498. 21 cysteine pairs are disulfide-bonded: Cys504-Cys541, Cys508-Cys546, Cys519-Cys531, Cys551-Cys562, Cys556-Cys572, Cys575-Cys586, Cys592-Cys608, Cys599-Cys617, Cys620-Cys644, Cys650-Cys663, Cys657-Cys676, Cys678-Cys689, Cys705-Cys713, Cys718-Cys738, Cys754-Cys774, Cys777-Cys797, Cys813-Cys833, Cys836-Cys856, Cys874-Cys894, Cys910-Cys930, and Cys946-Cys1167. An O-linked (Fuc...) threonine glycan is attached at Thr507. The tract at residues 531–1152 (CVGDVTENQV…YAGGRLGLFV (622 aa)) is involved in retention in extracellular matrix (ECM); involved in trimer formation. The EGF-like 1 domain occupies 547–587 (PIDGCLSNPCFAGAKCTSYPDGSWKCGACPPGYSGNGIQCK). O-linked (Xyl) serine glycosylation occurs at Ser553. The EGF-like 2 domain maps to 646–690 (PRNPCTDGTHDCNKNAKCNYLGHYSDPMYRCECKPGYAGNGIICG). 8 TSP type-3 repeats span residues 691–726 (EDTDLDGWPNENLVCVANATYHCKKDNCPNLPNSGQ), 727–762 (EDYDKDGIGDACDDDDDNDKIPDDRDNCPFHYNPAQ), 763–785 (YDYDRDDVGDRCDNCPYNHNPDQ), 786–821 (ADTDKNGEGDACAVDIDGDGILNERDNCQYVYNVDQ), 822–844 (RDTDMDGVGDQCDNCPLEHNPDQ), 845–882 (LDSDSDLIGDTCDNNQDIDEDGHQNNLDNCPYVPNANQ), 883–918 (ADHDKDGKGDACDHDDDNDGIPDDRDNCRLVPNPDQ), and 919–954 (KDSDGDGRGDACKDDFDHDNVPDIDDICPENFDISE). N-linked (GlcNAc...) asparagine glycosylation occurs at Asn708. Residues 840–934 (HNPDQLDSDS…GRGDACKDDF (95 aa)) are disordered. 2 stretches are compositionally biased toward basic and acidic residues: residues 883 to 894 (ADHDKDGKGDAC) and 917 to 934 (DQKDSDGDGRGDACKDDF). A Cell attachment site motif is present at residues 926–928 (RGD). Residues 958-1170 (RRFQMIPLDP…SDMKYECRDS (213 aa)) enclose the TSP C-terminal domain. N-linked (GlcNAc...) asparagine glycosylation is present at Asn1067.

The protein belongs to the thrombospondin family. In terms of assembly, homotrimer; disulfide-linked. Can bind to fibrinogen, fibronectin, laminin, type V collagen and integrins alpha-V/beta-1, alpha-V/beta-3 and alpha-IIb/beta-3. Binds heparin. Interacts (via the C-terminal domain) with CD47. Interacts (via the TSP type I repeats) with CD36; the interaction conveys an antiangiogenic effect. Interacts (via the TSP type I repeats) with HRG; the interaction blocks the antiangiogenic effect of THBS1 with CD36. Interacts with ATF6 (via lumenal domain). Interacts with FN1; this interaction is enhanced by TNFAIP6, which may act as a bridging molecule between FN1 and THBS1. Interacts with SIRPA; the interaction stimulates phosphorylation of SIRPA.

It localises to the secreted. Its subcellular location is the cell surface. The protein localises to the extracellular space. The protein resides in the extracellular matrix. It is found in the endoplasmic reticulum. It localises to the sarcoplasmic reticulum. Its function is as follows. Adhesive glycoprotein that mediates cell-to-cell and cell-to-matrix interactions. Multifunctional, involved in inflammation, angiogenesis, wound healing, reactive oxygen species (ROS) signaling, nitrous oxide (NO) signaling, apoptosis, senescence, aging, cellular self-renewal, stemness, and cardiovascular and metabolic homeostasis. Negatively modulates dendritic cell activation and cytokine release, as part of an autocrine feedback loop, contributing to the resolution of inflammation and immune homeostasis. Ligand for receptor CD47. Modulates nitrous oxide (NO) signaling via CD47, hence playing a role as a pressor agent, supporting blood pressure. Plays a role in endothelial cell senescence, acting via CD47, by increasing the abundance and activation of NADPH oxidase NOX1, and so generating excess ROS. Inhibits stem cell self-renewal, acting via CD47 signaling, probably by regulation of the stem cell transcription factors POU5F1/OCT4, SOX2, MYC/c-Myc and KLF4. Negatively modulates wound healing, acting via CD47. Ligand for receptor CD36. Involved in inducing apoptosis in podocytes in response to elevated free fatty acids, acting via CD36. Plays a role in suppressing angiogenesis, acting, depending on context, via CD36 or CD47. Promotes cellular senescence in a TP53-CDKN1A-RB1 signaling-dependent manner. Ligand for immunoglobulin-like cell surface receptor SIRPA. Involved in ROS signaling in non-phagocytic cells, stimulating NADPH oxidase-derived ROS production, acting via interaction with SIRPA. Plays a role in metabolic dysfunction in diet-induced obesity, perhaps acting by exacerbating adipose inflammatory activity; its effects may be mediated, at least in part, through enhanced adipocyte proliferation. Plays a role in ER stress response, via its interaction with the activating transcription factor 6 alpha (ATF6) which produces adaptive ER stress response factors. May be involved in age-related conditions, including metabolic dysregulation, during normal aging. In Mus musculus (Mouse), this protein is Thrombospondin-1 (Thbs1).